Reading from the N-terminus, the 204-residue chain is Proteasome subunit beta type-2-A (204 aa).

Met1 is subject to N-acetylmethionine.

Belongs to the peptidase T1B family. As to quaternary structure, component of the 20S core complex of the 26S proteasome. The 26S proteasome is composed of a core protease (CP), known as the 20S proteasome, capped at one or both ends by the 19S regulatory particle (RP/PA700). The 20S proteasome core is composed of 28 subunits that are arranged in four stacked rings, resulting in a barrel-shaped structure. The two end rings are each formed by seven alpha subunits, and the two central rings are each formed by seven beta subunits. The catalytic chamber with the active sites is on the inside of the barrel.

It is found in the cytoplasm. It localises to the nucleus. Functionally, non-catalytic component of the proteasome, a multicatalytic proteinase complex which is characterized by its ability to cleave peptides with Arg, Phe, Tyr, Leu, and Glu adjacent to the leaving group at neutral or slightly basic pH. The proteasome has an ATP-dependent proteolytic activity. The chain is Proteasome subunit beta type-2-A (PBD1) from Arabidopsis thaliana (Mouse-ear cress).